Consider the following 196-residue polypeptide: Pyridoxine/pyridoxamine 5'-phosphate oxidase (196 aa).

Residues 44 to 49 (RTVLLK), 59 to 60 (YT), R65, K66, and Q88 contribute to the FMN site. K49 provides a ligand contact to substrate. Substrate-binding residues include Y106, R110, and S114. FMN is bound by residues 123–124 (QS) and W169. A substrate-binding site is contributed by 175–177 (RLH). FMN is bound at residue R179.

It belongs to the pyridoxamine 5'-phosphate oxidase family. In terms of assembly, homodimer. The cofactor is FMN.

The enzyme catalyses pyridoxamine 5'-phosphate + O2 + H2O = pyridoxal 5'-phosphate + H2O2 + NH4(+). It catalyses the reaction pyridoxine 5'-phosphate + O2 = pyridoxal 5'-phosphate + H2O2. It participates in cofactor metabolism; pyridoxal 5'-phosphate salvage; pyridoxal 5'-phosphate from pyridoxamine 5'-phosphate: step 1/1. Its pathway is cofactor metabolism; pyridoxal 5'-phosphate salvage; pyridoxal 5'-phosphate from pyridoxine 5'-phosphate: step 1/1. Functionally, catalyzes the oxidation of either pyridoxine 5'-phosphate (PNP) or pyridoxamine 5'-phosphate (PMP) into pyridoxal 5'-phosphate (PLP). This is Pyridoxine/pyridoxamine 5'-phosphate oxidase from Alkalilimnicola ehrlichii (strain ATCC BAA-1101 / DSM 17681 / MLHE-1).